Reading from the N-terminus, the 365-residue chain is Aminomethyltransferase (365 aa).

The protein belongs to the GcvT family. The glycine cleavage system is composed of four proteins: P, T, L and H.

It catalyses the reaction N(6)-[(R)-S(8)-aminomethyldihydrolipoyl]-L-lysyl-[protein] + (6S)-5,6,7,8-tetrahydrofolate = N(6)-[(R)-dihydrolipoyl]-L-lysyl-[protein] + (6R)-5,10-methylene-5,6,7,8-tetrahydrofolate + NH4(+). Functionally, the glycine cleavage system catalyzes the degradation of glycine. This chain is Aminomethyltransferase, found in Chlorobium phaeobacteroides (strain DSM 266 / SMG 266 / 2430).